The primary structure comprises 57 residues: RPSFCNLPVKPGPCSGFFSAFYYSQKTNKCHSFTYSGCRGNGNRFRTIEECRRTCVG.

Residues 5–55 (CNLPVKPGPCSGFFSAFYYSQKTNKCHSFTYSGCRGNGNRFRTIEECRRTC) form the BPTI/Kunitz inhibitor domain. 3 disulfides stabilise this stretch: Cys-5–Cys-55, Cys-14–Cys-38, and Cys-30–Cys-51.

Belongs to the venom Kunitz-type family. As to expression, expressed by the venom gland.

It is found in the secreted. Its function is as follows. Interacts with vasopressin V2 receptor (V2R/AVPR2), probably in a selective manner. Inhibits vasopressin binding human V2R in the nanomolar range (Ki=3.50 nM), and also potently inhibits vasopressin-induced cAMP production (IC(50)=21 nM). In vivo, intraperitoneal injection of this protein into rats increases diuresis by 6-fold, without any loss of electrolytes. This is Mambaquaretin-5 from Dendroaspis jamesoni kaimosae (Eastern Jameson's mamba).